The chain runs to 7094 residues: Replicase polyprotein 1ab (7094 aa).

Residues 54–196 form the CoV Nsp1 globular domain; the sequence is PENHVMVDCR…PWVMYLRKCG (143 aa). The region spanning 216-246 is the BetaCoV Nsp1 C-terminal domain; it reads FKVEDAYDLVHDEPKGKFSKKAYALIRGYRG. The region spanning 250–519 is the CoV Nsp2 N-terminal domain; sequence LLYVDQYGCD…LICKALYLDY (270 aa). 4 residues coordinate Zn(2+): cysteine 392, cysteine 397, cysteine 413, and cysteine 416. The tract at residues 392–416 is C4; sequence CEQDLCDFKGWVPGNMIDGFACTTC. One can recognise a CoV Nsp2 middle domain in the interval 524-713; sequence CGNLHQRELL…AQAFRSVAKV (190 aa). The CoV Nsp2 C-terminal domain maps to 733 to 851; it reads RRRICLSGSK…LDQAWRVPCA (119 aa). Residues 853-966 enclose the Ubiquitin-like 1 domain; the sequence is RRVTFKEQPT…LYCAFTAPED (114 aa). Positions 1036–1274 constitute a Peptidase C16 1 domain; it reads DLESVIQDYE…IAQLYGSCIT (239 aa). Cysteine 1074 (for PL1-PRO activity) is an active-site residue. The Zn(2+) site is built by cysteine 1151, cysteine 1154, cysteine 1177, and cysteine 1179. A C4-type 1 zinc finger spans residues 1151 to 1179; sequence CIKCDLALKLKGLDAMFFYGDVVSHVCKC. Catalysis depends on for PL1-PRO activity residues histidine 1225 and aspartate 1236. A Macro domain is found at 1275 to 1435; that stretch reads PNVCFVKGDI…LISKCQITAV (161 aa). The DPUP domain maps to 1491-1563; the sequence is DDARTFVQSN…VAQIKALFLD (73 aa). The 56-residue stretch at 1562 to 1617 folds into the Ubiquitin-like 2 domain; that stretch reads LDKVDILLTVDGVNFTNRFVPVGENFGKSLGNVFCDGVNVTKHKCDINYKGKVFFQ. Residues 1631-1892 form the Peptidase C16 2 domain; the sequence is SSFNFDQKEL…KIEYKPDLSQ (262 aa). The For PL2-PRO activity role is filled by cysteine 1671. Zn(2+)-binding residues include cysteine 1749, cysteine 1751, cysteine 1783, and cysteine 1785. Residues 1749-1785 form a C4-type 2 zinc finger; sequence CKCGVKQEQRTGVDAVMHFGTLSREDLEIGYTVDCSC. Catalysis depends on for PL2-PRO activity residues histidine 1828 and aspartate 1842. In terms of domain architecture, Nucleic acid-binding spans 1906–2007; the sequence is IKAQFKTFEK…TYFNRPLLVD (102 aa). One can recognise a G2M domain in the interval 2020–2169; it reads DDGGDISESD…ADNKVIYTTE (150 aa). The next 3 helical transmembrane spans lie at 2138 to 2158, 2199 to 2219, and 2227 to 2247; these read ISAC…WIKI, ACII…NVIF, and IGFL…TFSL. The segment at 2138–2385 is HD1; the sequence is ISACFNFIKW…ASFIKLFSLF (248 aa). The region spanning 2235-2296 is the 3Ecto domain; it reads GKIAQWIKST…AIDVVQYEAD (62 aa). Intrachain disulfides connect cysteine 2251–cysteine 2275 and cysteine 2266–cysteine 2272. Transmembrane regions (helical) follow at residues 2313 to 2333, 2343 to 2363, and 2365 to 2385; these read LIVS…LISI, LFML…ANML, and AHVF…FSLF. A Y1 region spans residues 2383–2473; sequence SLFRHVAYGC…ELKRPIQPTD (91 aa). The CoV Nsp3 Y domain occupies 2383-2750; that stretch reads SLFRHVAYGC…LTTPFSLKGG (368 aa). Positions 2387, 2392, 2397, 2400, 2433, 2436, 2440, and 2443 each coordinate Zn(2+). Positions 2387 to 2400 are ZF1; it reads HVAYGCSKPGCLFC. Residues 2433–2443 are ZF2; that stretch reads CSKHQWNCIDC. The tract at residues 2474–2566 is Y2; it reads VAYHTVTDVK…MVDKNLITTA (93 aa). Residues 2474 to 2750 form a coV-Y region; that stretch reads VAYHTVTDVK…LTTPFSLKGG (277 aa). The segment at 2567–2649 is Y3; it reads NTGTSVTETM…DSVMSAVSAG (83 aa). Positions 2650–2750 are Y4; that stretch reads LELTDESCNN…LTTPFSLKGG (101 aa). A run of 7 helical transmembrane segments spans residues 2752–2772, 2824–2844, 3009–3029, 3031–3051, 3063–3083, 3090–3110, and 3115–3135; these read VFSY…IGLW, STFG…VAVV, VFDL…FLAL, ASSI…YYLI, IVFV…VFQV, VYAI…SVIM, and LVMY…SVVV. Residues 2752 to 3135 form an HD2 region; the sequence is VFSYFVYVCF…FCLLYISVVV (384 aa). In terms of domain architecture, Nsp4C spans 3149 to 3246; the sequence is LGTSVRSDGT…TASVSTSFLQ (98 aa). One can recognise a Peptidase C30 domain in the interval 3247-3549; it reads SGIVKMVNPT…YQQLAGIKLQ (303 aa). Active-site for 3CL-PRO activity residues include histidine 3287 and cysteine 3391. 7 helical membrane-spanning segments follow: residues 3558-3578, 3588-3608, 3614-3634, 3657-3677, 3684-3704, 3711-3731, and 3755-3775; these read GIVC…TAFV, TNML…MLLV, YLTM…YLVV, TYTD…FVTL, LFSF…WYMG, ILLM…LSMA, and IVLV…GLFS. The tract at residues 3558–3775 is HD3; it reads GIVCWIMAST…IISCYWGLFS (218 aa). Positions 3837-3925 constitute a RdRp Nsp7 cofactor domain; it reads SKLTDVKCAN…DYAKDNTVLQ (89 aa). Residues 3926-4122 form the RdRp Nsp8 cofactor domain; that stretch reads ALQSEFVNMA…HNEVSATVLQ (197 aa). In terms of domain architecture, Nsp9 ssRNA-binding spans 4123-4232; sequence NNELMPAKLK…GTISSTVRLQ (110 aa). The region spanning 4233–4370 is the ExoN/MTase coactivator domain; it reads AGTATEYASN…CVSTDTTVQS (138 aa). Residues cysteine 4306, cysteine 4309, histidine 4315, cysteine 4322, cysteine 4348, cysteine 4351, cysteine 4359, and cysteine 4361 each contribute to the Zn(2+) site. 2 zinc fingers span residues 4306–4322 and 4348–4361; these read CIYC…DGLC and CQVC…SCSC. The NiRAN domain maps to 4375-4630; the sequence is FLNRVRGTSV…DCELYVNNAY (256 aa). Mn(2+) is bound by residues asparagine 4578 and aspartate 4587. One can recognise a Nsp12 Interface domain in the interval 4631 to 4729; the sequence is RLFDLVQYDF…MNMDVDTHRY (99 aa). Residues histidine 4660, cysteine 4666, cysteine 4671, cysteine 4675, and cysteine 4852 each contribute to the Zn(2+) site. The 568-residue stretch at 4730-5297 folds into the Nsp12 RNA-dependent RNA polymerase domain; the sequence is RLSLKDLLLY…NMYLRSAVMQ (568 aa). The segment at 4732 to 4946 is rdRp Fingers N-ter; it reads SLKDLLLYAA…HQKCLKSIAA (215 aa). The rdRp Palm N-ter stretch occupies residues 4947-4985; it reads TRGVPVVIGTTKFYGGWDDMLRRLIKDVDNPVLMGWDYP. Residues 4977–5139 enclose the RdRp catalytic domain; sequence PVLMGWDYPK…CYNSDYASKG (163 aa). The tract at residues 4986 to 5044 is rdRp Fingers C-ter; it reads KCDRAMPNILRIVSSLVLARKHEACCSQSDRFYRLANECAQVLSEIVMCGGCYYVKPGG. Zn(2+) contacts are provided by histidine 5007, cysteine 5010, and cysteine 5011. The rdRp Palm C-ter stretch occupies residues 5045-5180; that stretch reads TSSGDATTAF…NNGPHEFCSQ (136 aa). Residues serine 5124, aspartate 5125, and aspartate 5126 contribute to the active site. The rdRp Thumb stretch occupies residues 5181–5297; sequence HTMLVKMDGD…NMYLRSAVMQ (117 aa). The region spanning 5298–5410 is the CV ZBD domain; it reads SVGACVVCSS…DDFNRIASCK (113 aa). Cysteine 5302, cysteine 5305, cysteine 5313, cysteine 5316, cysteine 5323, cysteine 5326, histidine 5330, histidine 5336, cysteine 5347, cysteine 5352, cysteine 5369, and histidine 5372 together coordinate Zn(2+). In terms of domain architecture, (+)RNA virus helicase ATP-binding spans 5553–5734; it reads SVLETFQNNV…MCCLGPDIFL (182 aa). Residue 5578 to 5585 participates in ATP binding; the sequence is GPPGTGKS. The (+)RNA virus helicase C-terminal domain maps to 5735–5904; the sequence is GTCYRCPKEI…VETRVQCSTN (170 aa). The 216-residue stretch at 5971 to 6186 folds into the ExoN domain; the sequence is LFITKEEAVK…RCLAVYDCFC (216 aa). Active-site residues include aspartate 5989, glutamate 5991, and glutamate 6090. Zn(2+)-binding residues include cysteine 6106, cysteine 6109, cysteine 6125, histidine 6128, histidine 6156, cysteine 6160, and histidine 6163. Catalysis depends on residues histidine 6167 and aspartate 6172. Cysteine 6178 contacts Zn(2+). The 227-residue stretch at 6195–6421 folds into the N7-MTase domain; the sequence is YPIISNELSI…NLWNTFTKLQ (227 aa). 6230–6236 is an S-adenosyl-L-methionine binding site; it reads DIGNPKA. A gpppA-binding region spans residues 6308–6322; sequence CNGGSLYVNKHAFHT. Zn(2+) contacts are provided by cysteine 6346, cysteine 6367, cysteine 6378, and histidine 6381. The Nsp15 N-terminal oligomerization domain maps to 6422-6482; it reads SLENVVYNLV…NVAVELFAKR (61 aa). Residues 6483 to 6603 enclose the AV-Nsp11N/CoV-Nsp15M domain; that stretch reads SIRHHPELKL…FAVRKEGQDV (121 aa). The NendoU domain maps to 6653–6792; it reads TCRTDMEKDF…NDEKVMTFYP (140 aa). Active-site residues include histidine 6683, histidine 6698, lysine 6738, lysine 6841, aspartate 6925, lysine 6965, and glutamate 6998. Positions 6797-7091 constitute a Nidovirus-type SAM-dependent 2'-O-MTase domain; that stretch reads ASDWKPGYSM…KEVFVGDSLV (295 aa).

This sequence belongs to the coronaviruses polyprotein 1ab family. As to quaternary structure, interacts with host PHB and PHB2. Interacts with papain-like protease nsp3 and non-structural protein 6. In terms of assembly, monomer. Homodimer. Only the homodimer shows catalytic activity. As to quaternary structure, interacts with nsp8 and nsp12 to form the replication-transcription complex (RTC): nsp12, nsp7, two subunits of nsp8, and up to two subunits of nsp13. Interacts with nsp7, nsp13 and nsp12 to form the replication-transcription complex (RTC): nsp12, nsp7, two subunits of nsp8, and up to two subunits of nsp13. In terms of assembly, interacts with nsp12. As to quaternary structure, interacts with proofreading exoribonuclease nsp14 and 2'-O-methyltransferase nsp16; these interactions enhance nsp14 and nsp16 enzymatic activities. Interacts with nsp7 and nsp8 to form the replication-transcription complex (RTC): nsp12, nsp7, two subunits of nsp8, and up to two subunits of nsp13. Interacts with nsp9. In terms of assembly, interacts with nsp8 to form the replication-transcription complex (RTC): nsp12, nsp7, two subunits of nsp8, and up to two subunits of nsp13. It depends on Mn(2+) as a cofactor. Mg(2+) is required as a cofactor. Post-translationally, specific enzymatic cleavages in vivo by its own proteases yield mature proteins. 3CL-PRO and PL-PRO proteinases are autocatalytically processed.

Its subcellular location is the host membrane. It localises to the host cytoplasm. The protein resides in the host perinuclear region. It is found in the host endoplasmic reticulum-Golgi intermediate compartment. It catalyses the reaction RNA(n) + a ribonucleoside 5'-triphosphate = RNA(n+1) + diphosphate. It carries out the reaction ATP + H2O = ADP + phosphate + H(+). The enzyme catalyses Thiol-dependent hydrolysis of ester, thioester, amide, peptide and isopeptide bonds formed by the C-terminal Gly of ubiquitin (a 76-residue protein attached to proteins as an intracellular targeting signal).. The catalysed reaction is a 5'-end (N(7)-methyl 5'-triphosphoguanosine)-ribonucleoside in mRNA + S-adenosyl-L-methionine = a 5'-end (N(7)-methyl 5'-triphosphoguanosine)-(2'-O-methyl-ribonucleoside) in mRNA + S-adenosyl-L-homocysteine + H(+). It catalyses the reaction uridylyl-uridylyl-ribonucleotide-RNA = a 3'-end uridylyl-2',3'-cyclophospho-uridine-RNA + a 5'-end dephospho-ribonucleoside-RNA. It carries out the reaction a 5'-end diphospho-ribonucleoside in mRNA + GTP + H(+) = a 5'-end (5'-triphosphoguanosine)-ribonucleoside in mRNA + diphosphate. The enzyme catalyses a 5'-end (5'-triphosphoguanosine)-ribonucleoside in mRNA + S-adenosyl-L-methionine = a 5'-end (N(7)-methyl 5'-triphosphoguanosine)-ribonucleoside in mRNA + S-adenosyl-L-homocysteine. Its function is as follows. The replicase polyprotein of coronaviruses is a multifunctional protein: it contains the activities necessary for the transcription of negative stranded RNA, leader RNA, subgenomic mRNAs and progeny virion RNA as well as proteinases responsible for the cleavage of the polyprotein into functional products. Inhibits host translation by interacting with the 40S ribosomal subunit. The nsp1-40S ribosome complex further induces an endonucleolytic cleavage near the 5'UTR of host mRNAs, targeting them for degradation. Viral mRNAs are not susceptible to nsp1-mediated endonucleolytic RNA cleavage thanks to the presence of a 5'-end leader sequence and are therefore protected from degradation. By suppressing host gene expression, nsp1 facilitates efficient viral gene expression in infected cells and evasion from host immune response. In terms of biological role, may play a role in the modulation of host cell survival signaling pathway by interacting with host PHB and PHB2. Indeed, these two proteins play a role in maintaining the functional integrity of the mitochondria and protecting cells from various stresses. Functionally, responsible for the cleavages located at the N-terminus of the replicase polyprotein. In addition, PL-PRO possesses a deubiquitinating/deISGylating activity and processes both 'Lys-48'- and 'Lys-63'-linked polyubiquitin chains from cellular substrates. Participates together with nsp4 in the assembly of virally-induced cytoplasmic double-membrane vesicles necessary for viral replication. Antagonizes innate immune induction of type I interferon by blocking the phosphorylation, dimerization and subsequent nuclear translocation of host IRF3. Also prevents host NF-kappa-B signaling. Its function is as follows. Participates in the assembly of virally-induced cytoplasmic double-membrane vesicles necessary for viral replication. Cleaves the C-terminus of replicase polyprotein at 11 sites. Recognizes substrates containing the core sequence [ILMVF]-Q-|-[SGACN]. Also able to bind an ADP-ribose-1''-phosphate (ADRP). In terms of biological role, plays a role in the initial induction of autophagosomes from host endoplasmic reticulum. Later, limits the expansion of these phagosomes that are no longer able to deliver viral components to lysosomes. Functionally, forms a hexadecamer with nsp8 (8 subunits of each) that may participate in viral replication by acting as a primase. Alternatively, may synthesize substantially longer products than oligonucleotide primers. Its function is as follows. Forms a hexadecamer with nsp7 (8 subunits of each) that may participate in viral replication by acting as a primase. Alternatively, may synthesize substantially longer products than oligonucleotide primers. Forms a primer, NSP9-pU, which is utilized by the polymerase for the initiation of RNA chains. Interacts with ribosome signal recognition particle RNA (SRP). Together with NSP8, suppress protein integration into the cell membrane, thereby disrupting host immune defenses. In terms of biological role, plays a pivotal role in viral transcription by stimulating both nsp14 3'-5' exoribonuclease and nsp16 2'-O-methyltransferase activities. Therefore plays an essential role in viral mRNAs cap methylation. Functionally, RNA-directed RNA polymerase that catalyzes the transcription of viral genomic and subgenomic RNAs. Acts in complex with nsp7 and nsp8 to transcribe both the minus and positive strands of genomic RNA. The kinase-like NiRAN domain of NSP12 attaches one or more nucleotides to the amino terminus of NSP9, forming a covalent RNA-protein intermediate that serves as transcription/replication primer. Subgenomic RNAs (sgRNAs) are formed by discontinuous transcription: The polymerase has the ability to pause at transcription-regulating sequences (TRS) and jump to the leader TRS, resulting in a major deletion. This creates a series of subgenomic RNAs that are replicated, transcribed and translated. In addition, Nsp12 is a subunit of the viral RNA capping enzyme that catalyzes the RNA guanylyltransferase reaction for genomic and sub-genomic RNAs. Subsequently, the NiRAN domain transfers RNA to GDP, and forms the core cap structure GpppA-RNA. Its function is as follows. Multi-functional protein with a zinc-binding domain in N-terminus displaying RNA and DNA duplex-unwinding activities with 5' to 3' polarity. Activity of helicase is dependent on magnesium. Plays a role in viral RNA synthesis through two distinct activities. The N7-guanine methyltransferase activity plays a role in the formation of the cap structure GpppA-RNA. The proofreading exoribonuclease reduces the sensitivity of the virus to RNA mutagens during replication. This activity acts on both ssRNA and dsRNA in a 3'-5' direction. In terms of biological role, plays a role in viral transcription/replication and prevents the simultaneous activation of host cell dsRNA sensors, such as MDA5/IFIH1, OAS, and PKR. Acts by degrading the 5'-polyuridines generated during replication of the poly(A) region of viral genomic and subgenomic RNAs. Catalyzes a two-step reaction in which a 2'3'-cyclic phosphate (2'3'-cP) is first generated by 2'-O transesterification, which is then hydrolyzed to a 3'-phosphate (3'-P). If not degraded, poly(U) RNA would hybridize with poly(A) RNA tails and activate host dsRNA sensors. Functionally, methyltransferase that mediates mRNA cap 2'-O-ribose methylation to the 5'-cap structure of viral mRNAs. N7-methyl guanosine cap is a prerequisite for binding of nsp16. Therefore plays an essential role in viral mRNAs cap methylation which is essential to evade immune system. This Bos taurus (Bovine) protein is Replicase polyprotein 1ab (rep).